Consider the following 557-residue polypeptide: CTP synthase (557 aa).

The interval 1 to 272 (MARSKIVKHI…DSLVLKKLML (272 aa)) is amidoligase domain. Residue Ser18 participates in CTP binding. A UTP-binding site is contributed by Ser18. 19-24 (SLGKGI) contacts ATP. Residue Tyr59 coordinates L-glutamine. Asp76 provides a ligand contact to ATP. 2 residues coordinate Mg(2+): Asp76 and Glu146. CTP is bound by residues 153–155 (DIE), 193–198 (KTKPTQ), and Lys229. UTP is bound by residues 193-198 (KTKPTQ) and Lys229. A Glutamine amidotransferase type-1 domain is found at 299–543 (EIGVCGKYTK…VAEAKKFRDE (245 aa)). Gly363 contributes to the L-glutamine binding site. Cys390 serves as the catalytic Nucleophile; for glutamine hydrolysis. L-glutamine is bound by residues 391–394 (LGMQ), Glu414, and Arg471. Active-site residues include His516 and Glu518.

The protein belongs to the CTP synthase family. As to quaternary structure, homotetramer.

It carries out the reaction UTP + L-glutamine + ATP + H2O = CTP + L-glutamate + ADP + phosphate + 2 H(+). It catalyses the reaction L-glutamine + H2O = L-glutamate + NH4(+). The enzyme catalyses UTP + NH4(+) + ATP = CTP + ADP + phosphate + 2 H(+). It functions in the pathway pyrimidine metabolism; CTP biosynthesis via de novo pathway; CTP from UDP: step 2/2. Its activity is regulated as follows. Allosterically activated by GTP, when glutamine is the substrate; GTP has no effect on the reaction when ammonia is the substrate. The allosteric effector GTP functions by stabilizing the protein conformation that binds the tetrahedral intermediate(s) formed during glutamine hydrolysis. Inhibited by the product CTP, via allosteric rather than competitive inhibition. Catalyzes the ATP-dependent amination of UTP to CTP with either L-glutamine or ammonia as the source of nitrogen. Regulates intracellular CTP levels through interactions with the four ribonucleotide triphosphates. The polypeptide is CTP synthase (Chloroherpeton thalassium (strain ATCC 35110 / GB-78)).